Consider the following 218-residue polypeptide: Pyridoxine/pyridoxamine 5'-phosphate oxidase (218 aa).

FMN is bound by residues 66–71 (RVVLLK), arginine 87, lysine 88, and glutamine 110. Lysine 71 serves as a coordination point for substrate. The substrate site is built by tyrosine 128, arginine 132, and serine 136. Residues 145–146 (QS) and tryptophan 190 contribute to the FMN site. 196–198 (RLH) is a binding site for substrate. Arginine 200 is a binding site for FMN.

Belongs to the pyridoxamine 5'-phosphate oxidase family. Homodimer. Requires FMN as cofactor.

The enzyme catalyses pyridoxamine 5'-phosphate + O2 + H2O = pyridoxal 5'-phosphate + H2O2 + NH4(+). It carries out the reaction pyridoxine 5'-phosphate + O2 = pyridoxal 5'-phosphate + H2O2. Its pathway is cofactor metabolism; pyridoxal 5'-phosphate salvage; pyridoxal 5'-phosphate from pyridoxamine 5'-phosphate: step 1/1. It participates in cofactor metabolism; pyridoxal 5'-phosphate salvage; pyridoxal 5'-phosphate from pyridoxine 5'-phosphate: step 1/1. Catalyzes the oxidation of either pyridoxine 5'-phosphate (PNP) or pyridoxamine 5'-phosphate (PMP) into pyridoxal 5'-phosphate (PLP). In Anaplasma marginale (strain St. Maries), this protein is Pyridoxine/pyridoxamine 5'-phosphate oxidase.